Reading from the N-terminus, the 527-residue chain is Gustatory receptor for bitter taste 66a (527 aa).

At 1 to 46 (MAQAEDAVQPLLQQFQQLFFISKIAGILPQDLEKFRSRNLLEKSRN) the chain is on the cytoplasmic side. A helical membrane pass occupies residues 47 to 67 (GMIYMLSTLILYVVLYNILIY). The Extracellular portion of the chain corresponds to 68-80 (SFGEEDRSLKASQ). A helical membrane pass occupies residues 81–101 (STLTFVIGLFLTYIGLIMMVS). Residues 102-144 (DQLTALRNQGRIGELYERIRLVDERLYKEGCVMDNSTIGRRIR) are Cytoplasmic-facing. The helical transmembrane segment at 145 to 165 (IMLIMTVIFELSILVSTYVKL) threads the bilayer. The Extracellular segment spans residues 166–174 (VDYSQWMSL). Residues 175 to 195 (LWIVSAIPTFINTLDKIWFAV) form a helical membrane-spanning segment. Over 196–345 (SLYALKERFE…KALNELWSYP (150 aa)) the chain is Cytoplasmic. The chain crosses the membrane as a helical span at residues 346–366 (ILSLMAYGFLIFTAQLYFLYC). Residues 367-382 (ATQYQSIPSLFRSAKN) lie on the Extracellular side of the membrane. Residues 383 to 403 (PFITVIVLSYTSGKCVYLIYL) traverse the membrane as a helical segment. At 404–460 (SWKTSQASKRTGISLHKCGVVADDNLLYEIVNHLSLKLLNHSVDFSACGFFTLDMET) the chain is on the cytoplasmic side. A helical membrane pass occupies residues 461–481 (LYGVSGGITSYLIILIQFNLA). At 482–527 (AQQAKEAIQTFNSLNDTAGLVGAATDMDNISSTLRDFVTTTMTPAV) the chain is on the extracellular side. Asn-496 and Asn-510 each carry an N-linked (GlcNAc...) asparagine glycan.

This sequence belongs to the insect chemoreceptor superfamily. Gustatory receptor (GR) family. Gr66a subfamily. In terms of tissue distribution, taste hairs in labial palps, labral and cibarial sense organs and forelegs. In larvae, is expressed in neurons of the terminal external chemosensory organ, as well as in the dorsal, ventral, and posterior pharyngeal sense organs.

The protein localises to the cell membrane. In terms of biological role, gustatory receptor required for response to the bitter in taste neurons. Gr66a cells respond to bitter compounds such as caffeine, theophylline, threonine or valine. Flies avoid bitter substances, suggesting that Gr66a neuron activity is sufficient to mediate avoidance behavior. Required for sensing and avoiding N,N-Diethyl-meta-toluamide (DEET), the most widely used insect repellent worldwide, as well as to L-canavanine, a plant-derived insecticide. Gr66a neurons are also involved in the sex-specific perception of molecules inducing male avoidance behavior, probably through sensing 7-tricosene (7-T), a male cuticular pheromone and leading to inhibition of male-male courtship. Finally, also plays a role in oviposition behavior, in which females evaluate their environment and choose to lay eggs on substrates they may find aversive in other contexts. This Drosophila melanogaster (Fruit fly) protein is Gustatory receptor for bitter taste 66a (Gr66a).